Reading from the N-terminus, the 932-residue chain is Protocadherin gamma-A8 (932 aa).

The signal sequence occupies residues 1-29 (MAAPQSRPRRGELILLCALLGTLWEIGRG). Cadherin domains follow at residues 30 to 133 (QIRY…NPKF), 134 to 242 (QVED…APVF), 243 to 347 (PHPI…RPEV), 348 to 452 (IITS…PPTF), 453 to 562 (PHAS…APEI), and 570 to 682 (DGST…KPSV). The Extracellular segment spans residues 30–692 (QIRYSVPEET…DPNDSSLTLY (663 aa)). Asparagine 47 is a glycosylation site (N-linked (GlcNAc...) asparagine). N-linked (GlcNAc...) asparagine glycosylation is found at asparagine 414, asparagine 419, and asparagine 545. Asparagine 685 is a glycosylation site (N-linked (GlcNAc...) asparagine). Residues 693–713 (LVVAVAAISCVFLAFVAVLLG) traverse the membrane as a helical segment. Residues 714 to 932 (LRLRRWHKSH…KKKSGKKEKK (219 aa)) are Cytoplasmic-facing. Disordered stretches follow at residues 804-841 (ADHG…WPNN) and 902-932 (ATLT…KEKK). Residues 810-841 (APPNTDWRFSQAQRPGTSGSQNGDDTGTWPNN) show a composition bias toward polar residues. The span at 922-932 (NKKKSGKKEKK) shows a compositional bias: basic residues.

Its subcellular location is the cell membrane. Functionally, potential calcium-dependent cell-adhesion protein. May be involved in the establishment and maintenance of specific neuronal connections in the brain. The protein is Protocadherin gamma-A8 (PCDHGA8) of Pan troglodytes (Chimpanzee).